The following is a 235-amino-acid chain: MGDSQYSFSLTTFSPSGKLVQIEHALTAVGSGQTSLGIKASNGVVIATEKKLPSILVDEASVQKIQHLTPNIGVVYSGMGPDFRVLVRKSRKQAEQYLRLYKEPIPVTQLVRETATVMQEFTQSGGVRPFGVSLLVAGYDDKGPQLYQVDPSGSYFSWKASAMGKNVSNAKTFLEKRYTEDMELDDAIHTAILTLKEGFEGEISSKNIEIGKIGADKVFRVLTPAEIDDYLAEVE.

Residue lysine 64 forms a Glycyl lysine isopeptide (Lys-Gly) (interchain with G-Cter in ubiquitin) linkage.

It belongs to the peptidase T1A family. In terms of assembly, component of the 20S core complex of the 26S proteasome. The 26S proteasome is composed of a core protease (CP), known as the 20S proteasome, capped at one or both ends by the 19S regulatory particle (RP/PA700). The 20S proteasome core is composed of 28 subunits that are arranged in four stacked rings, resulting in a barrel-shaped structure. The two end rings are each formed by seven alpha subunits, and the two central rings are each formed by seven beta subunits. The catalytic chamber with the active sites is on the inside of the barrel.

It localises to the cytoplasm. The protein resides in the nucleus. Functionally, the proteasome is a multicatalytic proteinase complex which is characterized by its ability to cleave peptides with Arg, Phe, Tyr, Leu, and Glu adjacent to the leaving group at neutral or slightly basic pH. The proteasome has an ATP-dependent proteolytic activity. In Arabidopsis thaliana (Mouse-ear cress), this protein is Proteasome subunit alpha type-2-A (PAB1).